The following is a 172-amino-acid chain: Translation initiation factor IF-3 (172 aa).

Belongs to the IF-3 family. As to quaternary structure, monomer.

The protein localises to the cytoplasm. Functionally, IF-3 binds to the 30S ribosomal subunit and shifts the equilibrium between 70S ribosomes and their 50S and 30S subunits in favor of the free subunits, thus enhancing the availability of 30S subunits on which protein synthesis initiation begins. The protein is Translation initiation factor IF-3 of Geobacter metallireducens (strain ATCC 53774 / DSM 7210 / GS-15).